A 133-amino-acid chain; its full sequence is Small ribosomal subunit protein bS18 (133 aa).

The segment at 1-63 (MARPDMGGPK…GDEGGGRRGF (63 aa)) is disordered. The segment covering 9–39 (PKTGGFGGPRSGGFGGGGGGGFGGGGFGGGR) has biased composition (gly residues). Basic and acidic residues predominate over residues 40-59 (GGDRGDRGDRDDRGGDEGGG).

The protein belongs to the bacterial ribosomal protein bS18 family. As to quaternary structure, part of the 30S ribosomal subunit. Forms a tight heterodimer with protein bS6.

Its function is as follows. Binds as a heterodimer with protein bS6 to the central domain of the 16S rRNA, where it helps stabilize the platform of the 30S subunit. This chain is Small ribosomal subunit protein bS18, found in Anaeromyxobacter dehalogenans (strain 2CP-1 / ATCC BAA-258).